The primary structure comprises 507 residues: Maturase K (507 aa).

The protein belongs to the intron maturase 2 family. MatK subfamily.

Its subcellular location is the plastid. It localises to the chloroplast. In terms of biological role, usually encoded in the trnK tRNA gene intron. Probably assists in splicing its own and other chloroplast group II introns. In Umbellularia californica (California bay laurel), this protein is Maturase K.